A 115-amino-acid polypeptide reads, in one-letter code: Dolichyl-diphosphooligosaccharide--protein glycosyltransferase subunit DAD1 (115 aa).

Residues 1–31 are Cytoplasmic-facing; that stretch reads MVKSTSKDAQDLFRSLRSAYSATPTNLKIID. Residues 32–52 traverse the membrane as a helical segment; that stretch reads LYVVFAVFTALIQVVYMALVG. Residues 53-55 are Lumenal-facing; that stretch reads SFP. Residues 56-76 traverse the membrane as a helical segment; the sequence is FNSFLSGVLSCIGTAVLAVCL. Over 77 to 94 the chain is Cytoplasmic; the sequence is RIQVNKENKEFKDLAPER. Residues 95–115 form a helical membrane-spanning segment; the sequence is AFADFVLCNLVLHLVIINFLG.

The protein belongs to the DAD/OST2 family. Component of the oligosaccharyltransferase (OST) complex. Ubiquitous.

Its subcellular location is the endoplasmic reticulum membrane. The protein operates within protein modification; protein glycosylation. In terms of biological role, subunit of the oligosaccharyl transferase (OST) complex that catalyzes the initial transfer of a defined glycan (Glc(3)Man(9)GlcNAc(2) in eukaryotes) from the lipid carrier dolichol-pyrophosphate to an asparagine residue within an Asn-X-Ser/Thr consensus motif in nascent polypeptide chains, the first step in protein N-glycosylation. N-glycosylation occurs cotranslationally and the complex associates with the Sec61 complex at the channel-forming translocon complex that mediates protein translocation across the endoplasmic reticulum (ER). All subunits are required for a maximal enzyme activity. This chain is Dolichyl-diphosphooligosaccharide--protein glycosyltransferase subunit DAD1 (DAD1), found in Arabidopsis thaliana (Mouse-ear cress).